Consider the following 177-residue polypeptide: MLDAFSRVVVNSDAKAAYVGGSDLQALKKFIAGGNKRLDSVNAIVSNASCIVSDAVSGMICENPGLIAPGGNCYTNRRMAACLRDGEIILRYVSYALLAGDPSVLEDRCLNGLKETYIALGVPTNSSVRAVSIMKAAAVAFITNTASQRKMATADGDCSALASEVASYCDRVAAAIS.

The phycourobilin site is built by Cys50 and Cys61. Asn72 is modified (N4-methylasparagine). (2R,3E)-phycoerythrobilin-binding residues include Cys82 and Cys158.

Belongs to the phycobiliprotein family. In terms of assembly, heterodimer of an alpha and a beta chain. In terms of processing, contains two covalently linked phycoerythrobilin chromophores and one covalently linked phycourobilin chromophore.

It is found in the plastid. It localises to the chloroplast thylakoid membrane. In terms of biological role, light-harvesting photosynthetic bile pigment-protein from the phycobiliprotein complex. The sequence is that of R-phycoerythrin beta chain (cpeB) from Pyropia yezoensis (Susabi-nori).